Consider the following 890-residue polypeptide: MAASVGNRQFATHMNGVVRSCGQDLKPSLPLDFDLDSSSSDDDENDDASYLKELVRKANAETEASVMDPRDEGTADQWVARNASMVRLTGKHPFNAESPLQRLMHHGFITPVPLHYVRNHGPVPKANWEDWTVEITGLVKRPTRFTMDRLVREFPHREFPATLVCAGNRRKEQNMVKKTIGFNWGSAGTSTSVWRGVPVRHVLRRCGILTRGKGALHVSFEGAENLPGGGGSKYGTSISREMAMDPSRDIILAYMQNGEPLAPDHGFPIRMIIPGFIGGRMVKWLKRIVVTEQECESHYHYKDNRVLPSHVDPELANEEGWWFKPEYIINELNINSVITTPCHDEILPINSWTTQRPYVVRGYAYSGGGRKVTRVEVTLDGGETWHVCTLDHPEKPNKYGKYWCWCFWSLEVEVLDLLGTKEIAVRAWDEGLNTQPENLIWNLMGMMNNCWFRVKTNVCKPHKGEIGIVFEHPTQPGNQPGGWMAKEKHLEQSQEAKPSLKKSVSTPFMNTASKMFSVSEVKKHSSPDSAWIIVHGHVYDCTRFLKDHPGGTDSILINAGTDCTEEFDAIHSDKAKKMLEDYRIGELITTGYTSADSSPNNSVHGNSEFIHLAPINEITTIPPLPPRSVALNPRQKIPCKLVSKTSISHDVRLFRFEMPSKNQLLGLPVGKHIFLCATIDGKLCMRAYTPTSSVEEVGFFDLLIKVYFKDVHPKFPNGGLMSQYLESLSIGSMLDVKGPLGHIEYTGRGNFTVNGKSRFAKRLAMLAGGTGITPIYQVAQAILKDPEDLTEMHVVYANRTEDDILLREELDTWAKEHCERFKVWYVVETAKEGWGYGVGFITEAIMREHLPEASSDSLAMTCGPPPMIQFAVQPNLEKMGYDIKNDLLVF.

A Mo-molybdopterin-binding site is contributed by Cys-165. The 76-residue stretch at 513-588 (SKMFSVSEVK…LEDYRIGELI (76 aa)) folds into the Cytochrome b5 heme-binding domain. Residues His-548 and His-571 each coordinate heme. The 113-residue stretch at 634 to 746 (RQKIPCKLVS…KGPLGHIEYT (113 aa)) folds into the FAD-binding FR-type domain. FAD-binding positions include 686 to 689 (RAYT), 703 to 707 (LIKVY), Phe-708, Phe-715, 720 to 722 (LMS), and Thr-773.

It belongs to the nitrate reductase family. Homodimer. FAD serves as cofactor. Heme is required as a cofactor. The cofactor is Mo-molybdopterin.

It catalyses the reaction nitrite + NAD(+) + H2O = nitrate + NADH + H(+). Nitrate reductase is a key enzyme involved in the first step of nitrate assimilation in plants, fungi and bacteria. This is Nitrate reductase [NADH] 2 (NIA2) from Phaseolus vulgaris (Kidney bean).